Consider the following 439-residue polypeptide: 23S rRNA (uracil(1939)-C(5))-methyltransferase RlmD (439 aa).

Residues 10–68 (QKKLRAAFTTIVQDLDYQGLGVAKIQGKTWFIENALPQEQVQVQVIEEKRQYGLGRVQK) form the TRAM domain. [4Fe-4S] cluster is bound by residues cysteine 81, cysteine 87, cysteine 90, and cysteine 168. Glutamine 271, phenylalanine 300, asparagine 305, glutamate 321, aspartate 348, and aspartate 369 together coordinate S-adenosyl-L-methionine. Residue cysteine 395 is the Nucleophile of the active site.

It belongs to the class I-like SAM-binding methyltransferase superfamily. RNA M5U methyltransferase family. RlmD subfamily.

The enzyme catalyses uridine(1939) in 23S rRNA + S-adenosyl-L-methionine = 5-methyluridine(1939) in 23S rRNA + S-adenosyl-L-homocysteine + H(+). Catalyzes the formation of 5-methyl-uridine at position 1939 (m5U1939) in 23S rRNA. In Histophilus somni (strain 129Pt) (Haemophilus somnus), this protein is 23S rRNA (uracil(1939)-C(5))-methyltransferase RlmD.